The following is a 376-amino-acid chain: Pulmonary surfactant-associated protein B (376 aa).

An N-terminal signal peptide occupies residues 1 to 24; it reads MAKLHLQWLLLLPTLCSLGAATES. Residues 25 to 63 form the Saposin A-type domain; that stretch reads ASSPDCAQGPKFWCQSLEQAIQCRALGHCLQEVWGHAGA. The propeptide occupies 25–190; the sequence is ASSPDCAQGP…PHTQDLSEQQ (166 aa). Saposin B-type domains are found at residues 63-145, 194-271, and 290-365; these read ANDL…PLGQ, PLPF…STAD, and QDTE…EAPA. Intrachain disulfides connect C67-C141, C70-C135, C98-C110, C198-C267, C201-C261, C225-C236, C294-C361, C297-C355, and C320-C330. The propeptide occupies 270–376; the sequence is ADAIGPALPA…PLQCFQTPHL (107 aa). Residue N306 is glycosylated (N-linked (GlcNAc...) asparagine).

Homodimer; disulfide-linked.

The protein localises to the secreted. Its subcellular location is the extracellular space. It is found in the surface film. Pulmonary surfactant-associated proteins promote alveolar stability by lowering the surface tension at the air-liquid interface in the peripheral air spaces. SP-B increases the collapse pressure of palmitic acid to nearly 70 millinewtons per meter. This is Pulmonary surfactant-associated protein B (Sftpb) from Rattus norvegicus (Rat).